We begin with the raw amino-acid sequence, 360 residues long: Dihydroorotate dehydrogenase (quinone) (360 aa).

FMN-binding positions include 67–71 (AGLDK) and Thr-91. Residue Lys-71 participates in substrate binding. 116–120 (NRMGF) serves as a coordination point for substrate. 2 residues coordinate FMN: Asn-145 and Asn-176. Asn-176 provides a ligand contact to substrate. The Nucleophile role is filled by Ser-179. Asn-181 provides a ligand contact to substrate. FMN is bound by residues Lys-222 and Ser-250. Position 251 to 252 (251 to 252 (NT)) interacts with substrate. Residues Gly-272, Gly-301, and 322-323 (YS) each bind FMN.

This sequence belongs to the dihydroorotate dehydrogenase family. Type 2 subfamily. As to quaternary structure, monomer. It depends on FMN as a cofactor.

Its subcellular location is the cell membrane. It catalyses the reaction (S)-dihydroorotate + a quinone = orotate + a quinol. Its pathway is pyrimidine metabolism; UMP biosynthesis via de novo pathway; orotate from (S)-dihydroorotate (quinone route): step 1/1. Functionally, catalyzes the conversion of dihydroorotate to orotate with quinone as electron acceptor. This Deinococcus deserti (strain DSM 17065 / CIP 109153 / LMG 22923 / VCD115) protein is Dihydroorotate dehydrogenase (quinone).